The sequence spans 489 residues: Para-nitrobenzyl esterase (489 aa).

S189 (acyl-ester intermediate) is an active-site residue. S189 carries the post-translational modification Phosphoserine. Active-site charge relay system residues include E310 and H399.

The protein belongs to the type-B carboxylesterase/lipase family. Monomer.

Functionally, catalyzes hydrolysis of several beta-lactam antibiotic PNB esters to the corresponding free acid and PNB alcohol. This is Para-nitrobenzyl esterase (pnbA) from Bacillus subtilis (strain 168).